We begin with the raw amino-acid sequence, 348 residues long: MLVAPPAFAEAQVLLQRLLNHESLGAVQARALMEQWSSGTLPEALSGALLAALQSKGVSAQELAAMAQVLQEQAVAVEASDRREPLVDTCGTGGDGAETFNISTAVAFVTAAAGVKVAKHGNRSASGRVGSADVLEALGLNLTAPSDRIHAAVDEVGITFLFAPGWHPAMKAVAPLRKILGVRTVFNLLGPLVNPLRPTGQVIGVYNPGLLPTISGALAELGVRRAIVLHGREGLDEGGLADCMDLAIVREGQLSQQVVDPRDLGLTQAPTVALKGGSVEENADILKAVLQGKGTRAQQDAVLLNAALALEVGEQVDRLDQGIGLARSVLASGAAWQKLTQLAAFLQS.

5-phospho-alpha-D-ribose 1-diphosphate contacts are provided by residues Gly-91, 94–95 (GD), Thr-99, 101–104 (NIST), 119–127 (KHGNRSASG), and Ser-131. Gly-91 lines the anthranilate pocket. A Mg(2+)-binding site is contributed by Ser-103. Position 122 (Asn-122) interacts with anthranilate. Residue Arg-177 participates in anthranilate binding. Mg(2+) contacts are provided by Asp-236 and Glu-237.

This sequence belongs to the anthranilate phosphoribosyltransferase family. As to quaternary structure, homodimer. The cofactor is Mg(2+).

It catalyses the reaction N-(5-phospho-beta-D-ribosyl)anthranilate + diphosphate = 5-phospho-alpha-D-ribose 1-diphosphate + anthranilate. It participates in amino-acid biosynthesis; L-tryptophan biosynthesis; L-tryptophan from chorismate: step 2/5. Catalyzes the transfer of the phosphoribosyl group of 5-phosphorylribose-1-pyrophosphate (PRPP) to anthranilate to yield N-(5'-phosphoribosyl)-anthranilate (PRA). The chain is Anthranilate phosphoribosyltransferase from Synechococcus sp. (strain ATCC 27144 / PCC 6301 / SAUG 1402/1) (Anacystis nidulans).